The chain runs to 432 residues: MTLWVLGLNHQTAPMELRERASFVGDALPRALDSLRNLPNVNEAALLSTCNRTELYAETTNAQILLNWLEQHRPGLQNHLYQYRDAAAVRHLFRVATGLDSMVLGESQILGQVKDSWSMARTHGTLGNTLDRLFQHGFSVAKHARTNTRIGANPVSIASTAVRLAQDAFSPLNESTVLLIGTGETIQLAAKHLSEGRVQRLLIANRTHAKAQMLASQHGGYALPLTELNLHLAEADIIFSATAAPTPIVTQSNVESALHIRKRKPMLLFDLAIPRDIETEVGTLTDAYLYTIDDLERAVEENRRSRREAAETAEAIIELQVKRYMDTLQAHAHQAPLRRLRTFGTTTRDELLTRARQQLANGRPAEEVLEQLAHGLTNRLLHPPTAALREAALANNTELVRAAEQLFPEKPGYHHPTLQTTIVKTDETDPAS.

Residues 49 to 52 (TCNR), Ser101, 106 to 108 (ESQ), and Gln112 contribute to the substrate site. Cys50 serves as the catalytic Nucleophile. Position 181–186 (181–186 (GTGETI)) interacts with NADP(+). The segment at 410–432 (KPGYHHPTLQTTIVKTDETDPAS) is disordered.

This sequence belongs to the glutamyl-tRNA reductase family. Homodimer.

It catalyses the reaction (S)-4-amino-5-oxopentanoate + tRNA(Glu) + NADP(+) = L-glutamyl-tRNA(Glu) + NADPH + H(+). The protein operates within porphyrin-containing compound metabolism; protoporphyrin-IX biosynthesis; 5-aminolevulinate from L-glutamyl-tRNA(Glu): step 1/2. Its function is as follows. Catalyzes the NADPH-dependent reduction of glutamyl-tRNA(Glu) to glutamate 1-semialdehyde (GSA). The sequence is that of Glutamyl-tRNA reductase from Xylella fastidiosa (strain 9a5c).